Consider the following 263-residue polypeptide: tRNA pseudouridine synthase A (263 aa).

Asp-73 (nucleophile) is an active-site residue. Tyr-131 is a binding site for substrate.

Belongs to the tRNA pseudouridine synthase TruA family. As to quaternary structure, homodimer.

The catalysed reaction is uridine(38/39/40) in tRNA = pseudouridine(38/39/40) in tRNA. Its function is as follows. Formation of pseudouridine at positions 38, 39 and 40 in the anticodon stem and loop of transfer RNAs. This is tRNA pseudouridine synthase A from Mycoplasmoides gallisepticum (strain R(low / passage 15 / clone 2)) (Mycoplasma gallisepticum).